The chain runs to 245 residues: UDP-2,3-diacylglucosamine hydrolase (245 aa).

Asp8, His10, Asp41, Asn79, and His114 together coordinate Mn(2+). Residue 79–80 (NR) participates in substrate binding. Residues Asp122, Ser160, Lys164, Lys167, and His195 each coordinate substrate. Mn(2+)-binding residues include His195 and His197.

This sequence belongs to the LpxH family. Requires Mn(2+) as cofactor.

It localises to the cell inner membrane. The catalysed reaction is UDP-2-N,3-O-bis[(3R)-3-hydroxytetradecanoyl]-alpha-D-glucosamine + H2O = 2-N,3-O-bis[(3R)-3-hydroxytetradecanoyl]-alpha-D-glucosaminyl 1-phosphate + UMP + 2 H(+). Its pathway is glycolipid biosynthesis; lipid IV(A) biosynthesis; lipid IV(A) from (3R)-3-hydroxytetradecanoyl-[acyl-carrier-protein] and UDP-N-acetyl-alpha-D-glucosamine: step 4/6. Functionally, hydrolyzes the pyrophosphate bond of UDP-2,3-diacylglucosamine to yield 2,3-diacylglucosamine 1-phosphate (lipid X) and UMP by catalyzing the attack of water at the alpha-P atom. Involved in the biosynthesis of lipid A, a phosphorylated glycolipid that anchors the lipopolysaccharide to the outer membrane of the cell. The protein is UDP-2,3-diacylglucosamine hydrolase of Aromatoleum aromaticum (strain DSM 19018 / LMG 30748 / EbN1) (Azoarcus sp. (strain EbN1)).